The chain runs to 443 residues: UDP-N-acetylmuramate--L-alanine ligase (443 aa).

110–116 (GAHGKTS) contacts ATP.

The protein belongs to the MurCDEF family.

It localises to the cytoplasm. The catalysed reaction is UDP-N-acetyl-alpha-D-muramate + L-alanine + ATP = UDP-N-acetyl-alpha-D-muramoyl-L-alanine + ADP + phosphate + H(+). It participates in cell wall biogenesis; peptidoglycan biosynthesis. Functionally, cell wall formation. This chain is UDP-N-acetylmuramate--L-alanine ligase, found in Lactococcus lactis subsp. lactis (strain IL1403) (Streptococcus lactis).